Consider the following 158-residue polypeptide: SsrA-binding protein (158 aa).

The interval 131 to 158 is disordered; sequence KQLHDKRQTEKERDWNKQKQRILQTNQR. Over residues 132 to 147 the composition is skewed to basic and acidic residues; the sequence is QLHDKRQTEKERDWNK.

Belongs to the SmpB family.

It localises to the cytoplasm. Required for rescue of stalled ribosomes mediated by trans-translation. Binds to transfer-messenger RNA (tmRNA), required for stable association of tmRNA with ribosomes. tmRNA and SmpB together mimic tRNA shape, replacing the anticodon stem-loop with SmpB. tmRNA is encoded by the ssrA gene; the 2 termini fold to resemble tRNA(Ala) and it encodes a 'tag peptide', a short internal open reading frame. During trans-translation Ala-aminoacylated tmRNA acts like a tRNA, entering the A-site of stalled ribosomes, displacing the stalled mRNA. The ribosome then switches to translate the ORF on the tmRNA; the nascent peptide is terminated with the 'tag peptide' encoded by the tmRNA and targeted for degradation. The ribosome is freed to recommence translation, which seems to be the essential function of trans-translation. In Teredinibacter turnerae (strain ATCC 39867 / T7901), this protein is SsrA-binding protein.